We begin with the raw amino-acid sequence, 2877 residues long: Desmoplakin (2877 aa).

The disordered stretch occupies residues 1-20 (MSCNGGSHPRINTLGRMTRA). An interaction with PKP1, JUP, PKP2 region spans residues 1-591 (MSCNGGSHPR…DYMKTIEDLE (591 aa)). The globular 1 stretch occupies residues 1 to 1063 (MSCNGGSHPR…ANSENCNKNK (1063 aa)). 2 positions are modified to phosphoserine: Ser22 and Ser62. Phosphotyrosine is present on Tyr65. Position 70 is a phosphothreonine (Thr70). 3 positions are modified to phosphoserine: Ser174, Ser175, and Ser183. Spectrin repeat units lie at residues 185-278 (SGWD…HLRQ) and 279-382 (LQNI…LKEN). A Spectrin 3a repeat occupies 383–453 (AAYFQFFEEA…NLVNKSKKIV (71 aa)). An SH3 domain is found at 465-522 (NKPIILRALCDYKQDQKIVHKGDECILKDNNERSKWYVTGPGGVDMLVPSVGLIIPPP). The Spectrin 3b repeat unit spans residues 523 to 552 (NPLAVDLSCKIEQYYEAILALWNQLYINMK). Spectrin repeat units lie at residues 553 to 634 (SLVS…IQLP), 661 to 776 (VIET…SLCS), and 777 to 890 (VRAL…DLEK). Coiled-coil stretches lie at residues 1034-1280 (LKLK…AEEN), 1313-1354 (NARH…YENE), 1395-1443 (TSGY…QKAS), and 1473-1926 (KQSL…KLED). A central fibrous rod domain region spans residues 1064-1952 (FLDQNLQKYQ…QKEIDKLRQR (889 aa)). A phosphoserine mark is found at Ser1665, Ser1715, and Ser2031. Positions 1953 to 2877 (PYGSHRETQT…YSFSSSSIGY (925 aa)) are globular 2. Residues 1967–2215 (TVDSSKLVFD…LLLSVQKRSM (249 aa)) are 4.5 X 38 AA tandem repeats (Domain A). 17 Plectin repeats span residues 2016–2052 (QPFL…PEST), 2053–2090 (VMLL…FDDR), 2091–2128 (QQIY…RETG), 2129–2166 (MRLL…RDLY), 2170–2204 (NDPR…PHTG), 2205–2240 (LLLL…PSTV), 2258–2295 (KDFL…PGTA), 2296–2333 (LELL…IEFK), 2334–2371 (EKLL…KGHG), 2372–2409 (IRLL…EELS), 2413–2447 (SDPS…EETG), 2463–2500 (SQKN…YETF), 2514–2551 (TITG…RKFF), 2617–2654 (SDPL…SITG), 2655–2692 (QRLL…QDMA), 2731–2768 (QRFL…GRAA), and 2769–2806 (QRLQ…DITG). Phosphoserine occurs at positions 2214, 2216, and 2232. Residues 2251-2453 (DEVGERIKDF…EETGLCLLPL (203 aa)) form a 4.5 X 38 AA tandem repeats (Domain B) region. Residues 2603–2628 (ISSVRNLTIRSSSLSDPLEESSPIAA) form an LRR 15 repeat. A 4.5 X 38 AA tandem repeats (Domain C) region spans residues 2616–2828 (LSDPLEESSP…GLPSPYNMSA (213 aa)). Residues Ser2817 and Ser2822 each carry the phosphoserine modification. The tract at residues 2817–2877 (SKGLPSPYNM…YSFSSSSIGY (61 aa)) is disordered. The residue at position 2824 (Tyr2824) is a Phosphotyrosine. Phosphoserine is present on residues Ser2827 and Ser2831. Residues 2830–2853 (GSRSGSRSGSRSGSRSGSRSGSRR) are 6 X 4 AA tandem repeats of G-S-R-[SR]. The segment covering 2830–2853 (GSRSGSRSGSRSGSRSGSRSGSRR) has biased composition (low complexity). Omega-N-methylarginine is present on residues Arg2832 and Arg2853. Ser2855 is modified (phosphoserine). Phosphothreonine is present on Thr2859. The segment covering 2862–2877 (SSYSYSYSFSSSSIGY) has biased composition (low complexity). Ser2874 carries the post-translational modification Phosphoserine.

It belongs to the plakin or cytolinker family. As to quaternary structure, homodimer. Interacts with COL17A1 (via cytoplasmic region). Interacts with DSC2. Interacts with PKP1. Interacts with PKP2. Interacts weakly with TMEM65. In terms of processing, phosphorylation at Ser-2855 increases association with intermediate filament cytokeratin, potentially facilitating interaction between desmosome junctions and intermediate filament architecture. Expressed in cardiomyocytes (at protein level).

It is found in the cell junction. It localises to the desmosome. The protein localises to the cell membrane. Its subcellular location is the cytoplasm. Functionally, major high molecular weight protein of desmosomes. Regulates profibrotic gene expression in cardiomyocytes via activation of the MAPK14/p38 MAPK signaling cascade and increase in TGFB1 protein abundance. The polypeptide is Desmoplakin (Rattus norvegicus (Rat)).